A 165-amino-acid polypeptide reads, in one-letter code: Large ribosomal subunit protein uL10 (165 aa).

This sequence belongs to the universal ribosomal protein uL10 family. In terms of assembly, part of the ribosomal stalk of the 50S ribosomal subunit. The N-terminus interacts with L11 and the large rRNA to form the base of the stalk. The C-terminus forms an elongated spine to which L12 dimers bind in a sequential fashion forming a multimeric L10(L12)X complex.

Functionally, forms part of the ribosomal stalk, playing a central role in the interaction of the ribosome with GTP-bound translation factors. In Citrobacter koseri (strain ATCC BAA-895 / CDC 4225-83 / SGSC4696), this protein is Large ribosomal subunit protein uL10.